Here is a 278-residue protein sequence, read N- to C-terminus: TIMELESS-interacting protein (278 aa).

The interval 1 to 59 (MLEQEENGLFEIPDYEHVEDETFPPFPPPASPERDPADAEPEEGSGSGVPVPPKRTVKR) is disordered. The interaction with TIMELESS stretch occupies residues 64–140 (LDATRLTSER…KEVQTCLKRI (77 aa)). Disordered stretches follow at residues 155-197 (NDEV…EEQQ) and 216-278 (LSNS…TNLD). S191 and S219 each carry phosphoserine. Residues 226–239 (VTVEENSTGEDQEE) are compositionally biased toward acidic residues. Residue T233 is modified to Phosphothreonine. Basic and acidic residues predominate over residues 259–278 (THEEEQCKAEETQLDHTNLD).

Belongs to the CSM3 family. In terms of assembly, interacts with MCM6 and MCM7. Interacts with TIMELESS (via N-terminus), which impairs TIMELESS self-association. Interacts with RPA2 and PRDX2. As to expression, expressed in brain.

Its subcellular location is the cytoplasm. The protein localises to the nucleus. Its function is as follows. Plays an important role in the control of DNA replication and the maintenance of replication fork stability. Important for cell survival after DNA damage or replication stress. May be specifically required for the ATR-CHEK1 pathway in the replication checkpoint induced by hydroxyurea or ultraviolet light. Forms a complex with TIMELESS and this complex regulates DNA replication processes under both normal and stress conditions, stabilizes replication forks and influences both CHEK1 phosphorylation and the intra-S phase checkpoint in response to genotoxic stress. In Mus musculus (Mouse), this protein is TIMELESS-interacting protein (Tipin).